We begin with the raw amino-acid sequence, 150 residues long: UPF0178 protein DMR_20710 (150 aa).

It belongs to the UPF0178 family.

The chain is UPF0178 protein DMR_20710 from Solidesulfovibrio magneticus (strain ATCC 700980 / DSM 13731 / RS-1) (Desulfovibrio magneticus).